Here is an 87-residue protein sequence, read N- to C-terminus: Beta-mammal toxin Css4 (87 aa).

The signal sequence occupies residues 1-19 (MNSLLMITACLALVGTVWA). The region spanning 20–85 (KEGYLVNSYT…VWPLPNKTCN (66 aa)) is the LCN-type CS-alpha/beta domain. 4 cysteine pairs are disulfide-bonded: Cys-31–Cys-84, Cys-35–Cys-60, Cys-44–Cys-65, and Cys-48–Cys-67. Asn-85 bears the Asparagine amide mark.

Belongs to the long (4 C-C) scorpion toxin superfamily. Sodium channel inhibitor family. Beta subfamily. As to expression, expressed by the venom gland.

It localises to the secreted. Its function is as follows. Beta toxins bind voltage-independently at site-4 of sodium channels (Nav) and shift the voltage of activation toward more negative potentials thereby affecting sodium channel activation and promoting spontaneous and repetitive firing. This toxin is active only on mammals. This Centruroides suffusus (Durango bark scorpion) protein is Beta-mammal toxin Css4.